A 418-amino-acid polypeptide reads, in one-letter code: Bile acid-CoA:amino acid N-acyltransferase (418 aa).

Residue Ser125 is modified to Phosphoserine. Active-site charge relay system residues include Cys235, Asp328, and His362. Position 416 is a phosphoserine (Ser416).

It belongs to the C/M/P thioester hydrolase family. As to quaternary structure, monomer. Expressed in the gallbladder mucosa and pancreas. Expressed in hepatocytes (at protein level).

The protein localises to the cytoplasm. The protein resides in the cytosol. It localises to the peroxisome. The catalysed reaction is choloyl-CoA + glycine = glycocholate + CoA + H(+). It catalyses the reaction hexadecanoyl-CoA + H2O = hexadecanoate + CoA + H(+). It carries out the reaction choloyl-CoA + H2O = cholate + CoA + H(+). The enzyme catalyses chenodeoxycholoyl-CoA + H2O = chenodeoxycholate + CoA + H(+). The catalysed reaction is eicosanoyl-CoA + H2O = eicosanoate + CoA + H(+). It catalyses the reaction octadecanoyl-CoA + H2O = octadecanoate + CoA + H(+). It carries out the reaction docosanoyl-CoA + H2O = docosanoate + CoA + H(+). The enzyme catalyses tetracosanoyl-CoA + H2O = tetracosanoate + CoA + H(+). The catalysed reaction is hexacosanoyl-CoA + H2O = hexacosanoate + CoA + H(+). It catalyses the reaction dodecanoyl-CoA + H2O = dodecanoate + CoA + H(+). It carries out the reaction tetradecanoyl-CoA + H2O = tetradecanoate + CoA + H(+). The enzyme catalyses choloyl-CoA + taurine = taurocholate + CoA + H(+). The catalysed reaction is chenodeoxycholoyl-CoA + glycine = glycochenodeoxycholate + CoA + H(+). It catalyses the reaction chenodeoxycholoyl-CoA + taurine = taurochenodeoxycholate + CoA + H(+). It carries out the reaction eicosanoyl-CoA + glycine = N-eicosanoylglycinate + CoA + H(+). The enzyme catalyses hexacosanoyl-CoA + glycine = N-hexacosanoylglycine + CoA + H(+). The catalysed reaction is docosanoyl-CoA + glycine = N-docosanoylglycine + CoA + H(+). Its function is as follows. Catalyzes the amidation of bile acids (BAs) with the amino acids taurine and glycine. More than 95% of the BAs are N-acyl amidates with glycine and taurine. Amidation of BAs in the liver with glycine or taurine prior to their excretion into bile is an important biochemical event in bile acid metabolism. This conjugation (or amidation) plays several important biological roles in that it promotes the secretion of BAs and cholesterol into bile and increases the detergent properties of BAs in the intestine, which facilitates lipid and vitamin absorption. May also act as an acyl-CoA thioesterase that regulates intracellular levels of free fatty acids. In vitro, catalyzes the hydrolysis of long- and very long-chain saturated acyl-CoAs to the free fatty acid and coenzyme A (CoASH), and conjugates glycine to these acyl-CoAs. This is Bile acid-CoA:amino acid N-acyltransferase (BAAT) from Homo sapiens (Human).